The sequence spans 314 residues: Vomeronasal type-1 receptor 98 (314 aa).

The Extracellular segment spans residues 1–19; the sequence is MNKDTTMYCSAYIRDVFFC. Residues 20–40 form a helical membrane-spanning segment; it reads EIGVGISANSCLLLFHIFMFI. The Cytoplasmic segment spans residues 41–49; that stretch reads RGHRPRLTD. Residues 50–70 traverse the membrane as a helical segment; the sequence is LPIGLMALIHLLMLLLAAYIA. Over 71 to 92 the chain is Extracellular; it reads KDFFMSSGWDDITCKLFIFLHR. Residues cysteine 84 and cysteine 171 are joined by a disulfide bond. A helical transmembrane segment spans residues 93-113; it reads FFRSLSVCATCMLSVFQTIIL. Topologically, residues 114–133 are cytoplasmic; that stretch reads CPQSSHLAKFKPNSPYHLSC. The chain crosses the membrane as a helical span at residues 134–154; the sequence is FFIFMSIFYTSISSHILIAAI. Residues 155 to 186 lie on the Extracellular side of the membrane; the sequence is ATQNLTSVNLIYITKSCSFLPMSSSMQRTFST. N-linked (GlcNAc...) asparagine glycosylation is present at asparagine 158. The chain crosses the membrane as a helical span at residues 187 to 207; that stretch reads LLAFRNAFLIGLMGLSTCYMA. At 208–235 the chain is on the cytoplasmic side; sequence TLLCRHKTRSQRLQNSKLSPKATPEQRA. A helical membrane pass occupies residues 236-256; it reads IWTLLMFMSFFLVMSTFDSII. At 257–268 the chain is on the extracellular side; that stretch reads SYSRTIFQGNPS. The helical transmembrane segment at 269–289 threads the bilayer; it reads LYCAQILVAHSYAVVSPMLVL. Over 290-314 the chain is Cytoplasmic; it reads SNENRLTNPLISMYERIVRLDFLCW.

The protein belongs to the G-protein coupled receptor 1 family.

It localises to the cell membrane. Putative pheromone receptor implicated in the regulation of social as well as reproductive behavior. The polypeptide is Vomeronasal type-1 receptor 98 (Vom1r98) (Rattus norvegicus (Rat)).